The sequence spans 191 residues: Pentapeptide repeat protein MfpA (191 aa).

A Pentapeptide repeat domain is found at 115–154 (CRLREVSLVGADLRKAVLRRADLTGSRVQDARLEEADLRG).

This sequence belongs to the pentapeptide repeat protein family. As to quaternary structure, homodimer. Probably interacts with DNA gyrase.

Functionally, when present on multicopy plasmids confers increased resistance to fluoroquinolone antibiotics such as ciprofloxacin and sparfloxacin but not the quinolone nalidixic acid. Forms a structure that exhibits size, shape and electrostatic similarity to B-form DNA; it may bind to DNA gyrase which is postulated to protect it from fluoroquinolones. This chain is Pentapeptide repeat protein MfpA, found in Mycolicibacterium smegmatis (strain ATCC 700084 / mc(2)155) (Mycobacterium smegmatis).